Consider the following 1640-residue polypeptide: Phospholipase D C (1640 aa).

The segment covering 122–132 (SHRSNQSFNHS) has biased composition (polar residues). Disordered regions lie at residues 122-247 (SHRS…KRLS), 264-283 (HNQN…HTTT), 439-499 (EKQQ…YKYN), and 521-541 (DDEY…PSQE). The span at 133-193 (NSTTPLNTTN…YSSDNSYLHN (61 aa)) shows a compositional bias: low complexity. Over residues 197 to 231 (DIYEDEDDEDDEDDDDDEDEDDEGKEFEQDDEDES) the composition is skewed to acidic residues. Residues 232–247 (TISSMSLKNSQAKRLS) show a composition bias toward polar residues. Low complexity-rich tracts occupy residues 264–273 (HNQNHQNHQN) and 467–499 (TTTT…YKYN). Residues 521 to 534 (DDEYYYGEYDDEDD) are compositionally biased toward acidic residues. Residues 1009–1036 (LYWSHHQKVVVVDQRIAFIGGLDLCFGR) form the PLD phosphodiesterase 1 domain. Active-site residues include histidine 1014, lysine 1016, and aspartate 1021. 2 stretches are compositionally biased toward low complexity: residues 1149-1274 (INNN…NNLN) and 1282-1296 (HNNS…QQQQ). Residues 1149–1315 (INNNNNNANN…YQPPLPPQQR (167 aa)) are disordered. Positions 1297–1306 (QHHHHHHHHY) are enriched in basic residues. The region spanning 1460 to 1487 (EQIYVHSKVLIVDDKIAIIGSANINDRS) is the PLD phosphodiesterase 2 domain. Catalysis depends on residues histidine 1465, lysine 1467, and aspartate 1472.

The protein belongs to the phospholipase D family.

It carries out the reaction a 1,2-diacyl-sn-glycero-3-phosphocholine + H2O = a 1,2-diacyl-sn-glycero-3-phosphate + choline + H(+). Inhibited by butan-1-ol. Functionally, plays a role in cell growth. Hydrolyzes membrane phospholipids, such as PtdCho (phosphatidylcholine), producing the free headgroup and PtdOH (phosphatidic acid; signaling molecule on its own). Involved in the inhibition of actin-based motility and endocytosis. Its inhibition causes complete collapse of F-actin organization. The sequence is that of Phospholipase D C (pldC) from Dictyostelium discoideum (Social amoeba).